The chain runs to 767 residues: Ribonucleoside-diphosphate reductase large subunit (767 aa).

Residues Thr-176, 191–192 (SC), Gly-222, 392–396 (NLCAE), and 578–582 (PTAGT) contribute to the substrate site. The cysteines at positions 192 and 408 are disulfide-linked. The active-site Proton acceptor is Asn-392. The active-site Cysteine radical intermediate is Cys-394. Glu-396 serves as the catalytic Proton acceptor.

It belongs to the ribonucleoside diphosphate reductase large chain family. In terms of assembly, heterotetramer composed of a homodimer of the large subunit (R1) and a homodimer of the small subunit (R2). Larger multisubunit protein complex are also active, composed of (R1)n(R2)n.

The enzyme catalyses a 2'-deoxyribonucleoside 5'-diphosphate + [thioredoxin]-disulfide + H2O = a ribonucleoside 5'-diphosphate + [thioredoxin]-dithiol. Functionally, ribonucleoside-diphosphate reductase holoenzyme provides the precursors necessary for viral DNA synthesis. Allows virus growth in non-dividing cells, as well as reactivation from latency in infected hosts. Catalyzes the biosynthesis of deoxyribonucleotides from the corresponding ribonucleotides. This is Ribonucleoside-diphosphate reductase large subunit from Saimiri sciureus (Common squirrel monkey).